The sequence spans 297 residues: Large ribosomal subunit protein uL18 (297 aa).

The residue at position 2 (G2) is an N-acetylglycine. K5 and K48 each carry N6-acetyllysine. S185 carries the phosphoserine modification. K220 is subject to N6-acetyllysine; alternate. A Glycyl lysine isopeptide (Lys-Gly) (interchain with G-Cter in SUMO1); alternate cross-link involves residue K220. A Glycyl lysine isopeptide (Lys-Gly) (interchain with G-Cter in SUMO2); alternate cross-link involves residue K220. Phosphothreonine is present on T232. A disordered region spans residues 253–297 (YEKKPKREVKKKRWNRPKMSLAQKKDRVAQKKASFLRAQERAAES). Basic residues predominate over residues 258–268 (KREVKKKRWNR). S272 carries the phosphoserine modification.

It belongs to the universal ribosomal protein uL18 family. In terms of assembly, component of the large ribosomal subunit (LSU). Part of the 5S RNP complex, which is a LSU subcomplex composed of the 5S RNA, RPL5 and RPL11. Component of a hexameric 5S RNP precursor complex, composed of 5S RNA, RRS1, RPF2/BXDC1, RPL5, RPL11 and HEATR3; this complex acts as a precursor for ribosome assembly. Interacts with NVL in an ATP-dependent manner. Interacts with RRP1B. Interacts with IPO5, IPO7 and KPNB1; these interactions may be involved in RPL5 nuclear import for the assembly of ribosomal subunits. Interacts with RRP1B.

The protein localises to the cytoplasm. Its subcellular location is the nucleus. It localises to the nucleolus. Component of the ribosome, a large ribonucleoprotein complex responsible for the synthesis of proteins in the cell. The small ribosomal subunit (SSU) binds messenger RNAs (mRNAs) and translates the encoded message by selecting cognate aminoacyl-transfer RNA (tRNA) molecules. The large subunit (LSU) contains the ribosomal catalytic site termed the peptidyl transferase center (PTC), which catalyzes the formation of peptide bonds, thereby polymerizing the amino acids delivered by tRNAs into a polypeptide chain. The nascent polypeptides leave the ribosome through a tunnel in the LSU and interact with protein factors that function in enzymatic processing, targeting, and the membrane insertion of nascent chains at the exit of the ribosomal tunnel. As part of the 5S RNP/5S ribonucleoprotein particle it is an essential component of the LSU, required for its formation and the maturation of rRNAs. It also couples ribosome biogenesis to p53/TP53 activation. As part of the 5S RNP it accumulates in the nucleoplasm and inhibits MDM2, when ribosome biogenesis is perturbed, mediating the stabilization and the activation of TP53. The polypeptide is Large ribosomal subunit protein uL18 (Rpl5) (Rattus norvegicus (Rat)).